A 349-amino-acid chain; its full sequence is NADP-dependent alcohol dehydrogenase C 1 (349 aa).

Zn(2+) contacts are provided by Cys41, His63, Cys94, Cys97, Cys100, Cys108, and Cys159. Residue Lys210 forms an Isoglutamyl lysine isopeptide (Lys-Gln) (interchain with Q-Cter in protein Pup) linkage.

It belongs to the zinc-containing alcohol dehydrogenase family. Zn(2+) serves as cofactor.

The catalysed reaction is a primary alcohol + NADP(+) = an aldehyde + NADPH + H(+). Functionally, prefers aldehydes over alcohols. This is NADP-dependent alcohol dehydrogenase C 1 (adhc1) from Mycolicibacterium smegmatis (strain ATCC 700084 / mc(2)155) (Mycobacterium smegmatis).